Consider the following 180-residue polypeptide: SAGA-associated factor 11 homolog (180 aa).

The SGF11-type zinc-finger motif lies at 98–119; that stretch reads CSCPNCNRIVAASRFAPHLEKC. The segment at 138–180 is disordered; that stretch reads RDGGNYFGADEDDEDDADWSGEKRKKKIAPVRTNGSKKNGKTS. The segment covering 146-156 has biased composition (acidic residues); that stretch reads ADEDDEDDADW.

It belongs to the SGF11 family. Component of some SAGA transcription coactivator-HAT complexes. Within the SAGA complex, participates in a subcomplex of SAGA called the DUB module (deubiquitination module).

The protein localises to the nucleus. In terms of biological role, component of the transcription regulatory histone acetylation (HAT) complex SAGA, a multiprotein complex that activates transcription by remodeling chromatin and mediating histone acetylation and deubiquitination. Within the SAGA complex, participates in a subcomplex that specifically deubiquitinates histone H2B. The SAGA complex is recruited to specific gene promoters by activators, where it is required for transcription. The polypeptide is SAGA-associated factor 11 homolog (Aedes aegypti (Yellowfever mosquito)).